The following is a 1343-amino-acid chain: Kinesin-like protein KIF7 (1343 aa).

Residues 15–349 form the Kinesin motor domain; that stretch reads PVRVALRVRP…LNYASRAQNI (335 aa). 94–101 contributes to the ATP binding site; that stretch reads GQTGSGKT. 3 disordered regions span residues 356–382, 451–483, and 611–639; these read NWRP…RSET, RSAL…RKED, and EVNR…TLHL. The interaction with DLG5 stretch occupies residues 358-479; sequence RPEAERPPEE…EDQAAQGAGG (122 aa). An interaction with SMO region spans residues 358–1206; that stretch reads RPEAERPPEE…LGRYMWINQE (849 aa). A coiled-coil region spans residues 480–542; it reads RKEDEGAQQL…ELRLRLELVR (63 aa). The segment at 513 to 775 is sufficient for interaction with NPHP1; the sequence is AMEQYKLQSD…LRELEGKELQ (263 aa). Coiled-coil stretches lie at residues 698–1057 and 1109–1211; these read ASEW…AAIE and TLRE…KQKL. Phosphoserine is present on Ser898. Disordered regions lie at residues 1219 to 1238 and 1310 to 1343; these read HSRG…APGN and GEAG…KNPL.

Belongs to the TRAFAC class myosin-kinesin ATPase superfamily. Kinesin family. KIF27 subfamily. Can form homodimers and interacts with microtubules. Interacts with GLI1, GLI2, GLI3, SMO and SUFU. Interacts with NPHP1. Interacts with SMO and DLG5 (via PDZ4 or guanylate kinase-like domain). In terms of processing, polyubiquitinated by UBR3. In terms of tissue distribution, embryonic stem cells, melanotic melanoma and Jurkat T-cells. Expressed in heart, lung, liver, kidney, testis, retina, placenta, pancreas, colon, small intestin, prostate and thymus.

It localises to the cell projection. Its subcellular location is the cilium. It is found in the cytoplasm. The protein localises to the cytoskeleton. The protein resides in the cilium basal body. Essential for hedgehog signaling regulation: acts both as a negative and positive regulator of sonic hedgehog (Shh) and Indian hedgehog (Ihh) pathways, acting downstream of SMO, through both SUFU-dependent and -independent mechanisms. Involved in the regulation of microtubular dynamics. Required for proper organization of the ciliary tip and control of ciliary localization of SUFU-GLI2 complexes. Required for localization of GLI3 to cilia in response to Shh. Negatively regulates Shh signaling by preventing inappropriate activation of the transcriptional activator GLI2 in the absence of ligand. Positively regulates Shh signaling by preventing the processing of the transcription factor GLI3 into its repressor form. In keratinocytes, promotes the dissociation of SUFU-GLI2 complexes, GLI2 nuclear translocation and Shh signaling activation. Involved in the regulation of epidermal differentiation and chondrocyte development. The protein is Kinesin-like protein KIF7 (KIF7) of Homo sapiens (Human).